The following is a 129-amino-acid chain: Aspartate 1-decarboxylase (129 aa).

Serine 25 serves as the catalytic Schiff-base intermediate with substrate; via pyruvic acid. Position 25 is a pyruvic acid (Ser) (serine 25). A substrate-binding site is contributed by threonine 57. Catalysis depends on tyrosine 58, which acts as the Proton donor. Substrate is bound at residue 73-75 (GAA).

This sequence belongs to the PanD family. In terms of assembly, heterooctamer of four alpha and four beta subunits. Requires pyruvate as cofactor. Is synthesized initially as an inactive proenzyme, which is activated by self-cleavage at a specific serine bond to produce a beta-subunit with a hydroxyl group at its C-terminus and an alpha-subunit with a pyruvoyl group at its N-terminus.

It is found in the cytoplasm. It catalyses the reaction L-aspartate + H(+) = beta-alanine + CO2. It functions in the pathway cofactor biosynthesis; (R)-pantothenate biosynthesis; beta-alanine from L-aspartate: step 1/1. Catalyzes the pyruvoyl-dependent decarboxylation of aspartate to produce beta-alanine. In Chlorobium chlorochromatii (strain CaD3), this protein is Aspartate 1-decarboxylase.